The following is a 199-amino-acid chain: Recombination protein RecR (199 aa).

The segment at 57-72 adopts a C4-type zinc-finger fold; sequence CSICGNITESDPCMIC. The Toprim domain maps to 80 to 176; that stretch reads SKVVVVEQPK…KVTRLAHGLA (97 aa).

The protein belongs to the RecR family.

Its function is as follows. May play a role in DNA repair. It seems to be involved in an RecBC-independent recombinational process of DNA repair. It may act with RecF and RecO. The chain is Recombination protein RecR from Ligilactobacillus salivarius (strain UCC118) (Lactobacillus salivarius).